Consider the following 397-residue polypeptide: Putative nickel insertion protein (397 aa).

This sequence belongs to the LarC family.

The chain is Putative nickel insertion protein from Synechococcus sp. (strain JA-3-3Ab) (Cyanobacteria bacterium Yellowstone A-Prime).